The following is a 426-amino-acid chain: Enolase (426 aa).

Position 163 (Q163) interacts with (2R)-2-phosphoglycerate. The active-site Proton donor is the E205. D242, E285, and D312 together coordinate Mg(2+). Positions 337, 366, 367, and 388 each coordinate (2R)-2-phosphoglycerate. The Proton acceptor role is filled by K337.

This sequence belongs to the enolase family. It depends on Mg(2+) as a cofactor.

The protein resides in the cytoplasm. It is found in the secreted. It localises to the cell surface. The catalysed reaction is (2R)-2-phosphoglycerate = phosphoenolpyruvate + H2O. Its pathway is carbohydrate degradation; glycolysis; pyruvate from D-glyceraldehyde 3-phosphate: step 4/5. In terms of biological role, catalyzes the reversible conversion of 2-phosphoglycerate (2-PG) into phosphoenolpyruvate (PEP). It is essential for the degradation of carbohydrates via glycolysis. The protein is Enolase of Desulfosudis oleivorans (strain DSM 6200 / JCM 39069 / Hxd3) (Desulfococcus oleovorans).